Reading from the N-terminus, the 421-residue chain is Serine hydroxymethyltransferase (421 aa).

Residues L121 and 125–127 (GHL) each bind (6S)-5,6,7,8-tetrahydrofolate. K229 carries the N6-(pyridoxal phosphate)lysine modification.

It belongs to the SHMT family. As to quaternary structure, homodimer. Pyridoxal 5'-phosphate serves as cofactor.

It localises to the cytoplasm. The catalysed reaction is (6R)-5,10-methylene-5,6,7,8-tetrahydrofolate + glycine + H2O = (6S)-5,6,7,8-tetrahydrofolate + L-serine. Its pathway is one-carbon metabolism; tetrahydrofolate interconversion. The protein operates within amino-acid biosynthesis; glycine biosynthesis; glycine from L-serine: step 1/1. Functionally, catalyzes the reversible interconversion of serine and glycine with tetrahydrofolate (THF) serving as the one-carbon carrier. This reaction serves as the major source of one-carbon groups required for the biosynthesis of purines, thymidylate, methionine, and other important biomolecules. Also exhibits THF-independent aldolase activity toward beta-hydroxyamino acids, producing glycine and aldehydes, via a retro-aldol mechanism. This chain is Serine hydroxymethyltransferase, found in Actinobacillus pleuropneumoniae serotype 5b (strain L20).